A 453-amino-acid chain; its full sequence is Ribulose bisphosphate carboxylase large chain (453 aa).

Positions 1–2 (MS) are excised as a propeptide. The residue at position 3 (Pro-3) is an N-acetylproline. Lys-14 is modified (N6,N6,N6-trimethyllysine). The substrate site is built by Asn-123 and Thr-173. Lys-175 (proton acceptor) is an active-site residue. Lys-177 is a binding site for substrate. Mg(2+) contacts are provided by Lys-201, Asp-203, and Glu-204. Lys-201 is modified (N6-carboxylysine). His-294 acts as the Proton acceptor in catalysis. 3 residues coordinate substrate: Arg-295, His-327, and Ser-379.

This sequence belongs to the RuBisCO large chain family. Type I subfamily. As to quaternary structure, heterohexadecamer of 8 large chains and 8 small chains; disulfide-linked. The disulfide link is formed within the large subunit homodimers. Mg(2+) is required as a cofactor. Post-translationally, the disulfide bond which can form in the large chain dimeric partners within the hexadecamer appears to be associated with oxidative stress and protein turnover.

It localises to the plastid. It is found in the chloroplast. The catalysed reaction is 2 (2R)-3-phosphoglycerate + 2 H(+) = D-ribulose 1,5-bisphosphate + CO2 + H2O. It catalyses the reaction D-ribulose 1,5-bisphosphate + O2 = 2-phosphoglycolate + (2R)-3-phosphoglycerate + 2 H(+). Functionally, ruBisCO catalyzes two reactions: the carboxylation of D-ribulose 1,5-bisphosphate, the primary event in carbon dioxide fixation, as well as the oxidative fragmentation of the pentose substrate in the photorespiration process. Both reactions occur simultaneously and in competition at the same active site. The protein is Ribulose bisphosphate carboxylase large chain of Cruciata glabra (Slender crosswort).